A 299-amino-acid polypeptide reads, in one-letter code: Protease HtpX homolog (299 aa).

A run of 2 helical transmembrane segments spans residues 15–35 and 39–59; these read ILLLVFFLLLALVGYAVGYLF and GLGGLVIALIIGFIYALSMIF. Residue H143 coordinates Zn(2+). Residue E144 is part of the active site. Residue H147 coordinates Zn(2+). Helical transmembrane passes span 158 to 178 and 198 to 218; these read IAVALASAITMLSSMAGRMMW and IIMLVVSLLAIVLAPLAATLV. Zn(2+) is bound at residue E227.

Belongs to the peptidase M48B family. Zn(2+) is required as a cofactor.

The protein localises to the cell membrane. In Streptococcus pneumoniae serotype 4 (strain ATCC BAA-334 / TIGR4), this protein is Protease HtpX homolog.